The following is a 176-amino-acid chain: ATP synthase subunit delta (176 aa).

The protein belongs to the ATPase delta chain family. As to quaternary structure, F-type ATPases have 2 components, F(1) - the catalytic core - and F(0) - the membrane proton channel. F(1) has five subunits: alpha(3), beta(3), gamma(1), delta(1), epsilon(1). F(0) has three main subunits: a(1), b(2) and c(10-14). The alpha and beta chains form an alternating ring which encloses part of the gamma chain. F(1) is attached to F(0) by a central stalk formed by the gamma and epsilon chains, while a peripheral stalk is formed by the delta and b chains.

It is found in the cell inner membrane. Functionally, f(1)F(0) ATP synthase produces ATP from ADP in the presence of a proton or sodium gradient. F-type ATPases consist of two structural domains, F(1) containing the extramembraneous catalytic core and F(0) containing the membrane proton channel, linked together by a central stalk and a peripheral stalk. During catalysis, ATP synthesis in the catalytic domain of F(1) is coupled via a rotary mechanism of the central stalk subunits to proton translocation. In terms of biological role, this protein is part of the stalk that links CF(0) to CF(1). It either transmits conformational changes from CF(0) to CF(1) or is implicated in proton conduction. The protein is ATP synthase subunit delta of Campylobacter hominis (strain ATCC BAA-381 / DSM 21671 / CCUG 45161 / LMG 19568 / NCTC 13146 / CH001A).